Consider the following 486-residue polypeptide: Alliin lyase 1 (486 aa).

Residues 1 to 28 (MVESYKKIGSCNKMPCLVILTCIIMSNS) form the signal peptide. Residues 29 to 38 (LVNNNNMVQA) constitute a propeptide that is removed on maturation. An EGF-like; atypical domain is found at 51 to 97 (EAVANINCSEHGRAFLDGIISEGSPKCECNTCYTGPDCSEKIQGCSA). Asn57 carries N-linked (GlcNAc...) asparagine glycosylation. 3 disulfides stabilise this stretch: Cys58-Cys77, Cys79-Cys88, and Cys82-Cys95. 130–138 (YFFNPVSNF) lines the chloride pocket. 2 N-linked (GlcNAc...) asparagine glycosylation sites follow: Asn184 and Asn229. Lys289 carries the N6-(pyridoxal phosphate)lysine modification. N-linked (GlcNAc...) asparagine glycosylation occurs at Asn366. A disulfide bridge connects residues Cys406 and Cys414.

Belongs to the alliinase family. As to quaternary structure, homodimer. The cofactor is pyridoxal 5'-phosphate. Expressed in bulb (at protein level). Expressed in shoots.

The protein resides in the vacuole. It carries out the reaction an S-alkyl-L-cysteine S-oxide = an S-alkyl sulfenate + 2-aminoprop-2-enoate. Able to cleave the C-S bond of sulfoxide derivatives of Cys to produce allicin, thus giving rise to all sulfur compounds which are responsible for most of the properties of garlic, such as the specific smell and flavor as well as the health benefits like blood lipid or blood pressure lowering. This Allium sativum (Garlic) protein is Alliin lyase 1.